The sequence spans 407 residues: Proteasome-activating nucleotidase (407 aa).

Residues 22–67 (KEKAYLAELESKVLRLELKNKDITRENVQIKKENEILKRELDKLRI) adopt a coiled-coil conformation. Residues 192-197 (GTGKTL) and His-331 each bind ATP. Residues 405 to 407 (MYG) are docks into pockets in the proteasome alpha-ring to cause gate opening.

This sequence belongs to the AAA ATPase family. As to quaternary structure, homohexamer. The hexameric complex has a two-ring architecture resembling a top hat that caps the 20S proteasome core at one or both ends. Upon ATP-binding, the C-terminus of PAN interacts with the alpha-rings of the proteasome core by binding to the intersubunit pockets.

The protein resides in the cytoplasm. Functionally, ATPase which is responsible for recognizing, binding, unfolding and translocation of substrate proteins into the archaeal 20S proteasome core particle. Is essential for opening the gate of the 20S proteasome via an interaction with its C-terminus, thereby allowing substrate entry and access to the site of proteolysis. Thus, the C-termini of the proteasomal ATPase function like a 'key in a lock' to induce gate opening and therefore regulate proteolysis. Unfolding activity requires energy from ATP hydrolysis, whereas ATP binding alone promotes ATPase-20S proteasome association which triggers gate opening, and supports translocation of unfolded substrates. This chain is Proteasome-activating nucleotidase, found in Methanococcus vannielii (strain ATCC 35089 / DSM 1224 / JCM 13029 / OCM 148 / SB).